The chain runs to 141 residues: Large ribosomal subunit protein bL17 (141 aa).

It belongs to the bacterial ribosomal protein bL17 family. In terms of assembly, part of the 50S ribosomal subunit. Contacts protein L32.

The sequence is that of Large ribosomal subunit protein bL17 from Bartonella bacilliformis (strain ATCC 35685 / KC583 / Herrer 020/F12,63).